A 434-amino-acid chain; its full sequence is Methylenetetrahydrofolate--tRNA-(uracil-5-)-methyltransferase TrmFO (434 aa).

10-15 (GAGLAG) serves as a coordination point for FAD.

The protein belongs to the MnmG family. TrmFO subfamily. It depends on FAD as a cofactor.

It is found in the cytoplasm. The enzyme catalyses uridine(54) in tRNA + (6R)-5,10-methylene-5,6,7,8-tetrahydrofolate + NADH + H(+) = 5-methyluridine(54) in tRNA + (6S)-5,6,7,8-tetrahydrofolate + NAD(+). It carries out the reaction uridine(54) in tRNA + (6R)-5,10-methylene-5,6,7,8-tetrahydrofolate + NADPH + H(+) = 5-methyluridine(54) in tRNA + (6S)-5,6,7,8-tetrahydrofolate + NADP(+). Catalyzes the folate-dependent formation of 5-methyl-uridine at position 54 (M-5-U54) in all tRNAs. The chain is Methylenetetrahydrofolate--tRNA-(uracil-5-)-methyltransferase TrmFO from Bacillus anthracis (strain A0248).